The following is a 780-amino-acid chain: APC membrane recruitment protein 3 (780 aa).

Positions 20 to 32 are enriched in basic and acidic residues; it reads KLIDSPAKEDPDK. Disordered regions lie at residues 20-59, 341-407, 547-569, 582-617, 635-659, 706-729, and 749-780; these read KLIDSPAKEDPDKWPLSLGEQQRAYGEKSSQTSPCSQGYG, ELPL…FPRD, KGREDQATTCFPPSRQEPWAHSG, GEPARGSKTPSKDDSLEEGTQDFSEGQSSSEATMTS, KELGTPGNLRYSQGPLRPGHRGSAL, KNPISSKPNEAAGCGLSSSASPQD, and LGPQACSSVDSQPQQLCPRAPEQVPHRGSVGS. Over residues 354–376 the composition is skewed to polar residues; it reads SKASSIDTGTPKSEQPESVSTSD. Positions 602 to 617 are enriched in polar residues; the sequence is QDFSEGQSSSEATMTS. Residues 753 to 763 show a composition bias toward polar residues; it reads ACSSVDSQPQQ.

It belongs to the Amer family.

Its subcellular location is the cell membrane. Its function is as follows. Regulator of the canonical Wnt signaling pathway. Acts by specifically binding phosphatidylinositol 4,5-bisphosphate (PtdIns(4,5)P2), translocating to the cell membrane. The protein is APC membrane recruitment protein 3 (Amer3) of Mus musculus (Mouse).